A 660-amino-acid chain; its full sequence is MEFKLHSKYKPTGDQPQAIEQLVKGFKEGNQFETLLGVTGSGKTFTMANVIAALNKPTLIISHNKTLAGQLYGEMKEFFPENAVEYFVSYYDYYQPEAYVPQSDTYIAKDSSVNDEIDKLRLSATAALTERKDVIVVASVSCIYGLGSPDEWTGMSISLRPGQERDRDDLARALIDLQYTRNDMDFHRGTFRVHGDVLDIFPANADDTAIRVEFFGDEIDRIVEVDVLTGEVKCSLEHTMIFPASHYVVSQEKINEACLNIEKELDERVKYFKGEDKLIEAQRIAERTNFDIEMMRETGFCSGIENYTRHLNFAKPGEPPMTLIDFFPDDFLIIVDESHITIPQIGGMYAGDRSRKTTLVDYGFRLPSALDNRPLNFEEFEGKIDQMLFVSATPNKYENEHELLRAEQIIRPTGLLDPEISVRPVEGQIDDLVSEVNKETANHHKVLITTLTKRMAEDLTNYMAELGIRVKYLHSDIDTLERAEIIRDLRLDVFDVLVGINLLREGLDIPEITLVAILDADKEGFLRSETSLIQTIGRAARNSEGHVIMYADKITDSMRVAIDETKRRRKVQEEYNEAHGITPQTIQKSVRDLIAISKKVAADENALDKDPESMSKKELEKHIADIEKKMKKAAAELNFEAAAEYRDKLIMLKNTLRDIR.

Residues 24–177 form the Helicase ATP-binding domain; sequence KGFKEGNQFE…DDLARALIDL (154 aa). 37 to 44 serves as a coordination point for ATP; the sequence is GVTGSGKT. The Beta-hairpin signature appears at 90 to 113; that stretch reads YYDYYQPEAYVPQSDTYIAKDSSV. Positions 428–594 constitute a Helicase C-terminal domain; that stretch reads QIDDLVSEVN…TIQKSVRDLI (167 aa). The region spanning 620-655 is the UVR domain; the sequence is EKHIADIEKKMKKAAAELNFEAAAEYRDKLIMLKNT.

It belongs to the UvrB family. In terms of assembly, forms a heterotetramer with UvrA during the search for lesions. Interacts with UvrC in an incision complex.

It localises to the cytoplasm. Its function is as follows. The UvrABC repair system catalyzes the recognition and processing of DNA lesions. A damage recognition complex composed of 2 UvrA and 2 UvrB subunits scans DNA for abnormalities. Upon binding of the UvrA(2)B(2) complex to a putative damaged site, the DNA wraps around one UvrB monomer. DNA wrap is dependent on ATP binding by UvrB and probably causes local melting of the DNA helix, facilitating insertion of UvrB beta-hairpin between the DNA strands. Then UvrB probes one DNA strand for the presence of a lesion. If a lesion is found the UvrA subunits dissociate and the UvrB-DNA preincision complex is formed. This complex is subsequently bound by UvrC and the second UvrB is released. If no lesion is found, the DNA wraps around the other UvrB subunit that will check the other stand for damage. The polypeptide is UvrABC system protein B (Agathobacter rectalis (strain ATCC 33656 / DSM 3377 / JCM 17463 / KCTC 5835 / VPI 0990) (Eubacterium rectale)).